Consider the following 277-residue polypeptide: S-formylglutathione hydrolase FrmB (277 aa).

Catalysis depends on charge relay system residues Ser145, Asp221, and His254.

The protein belongs to the esterase D family.

It carries out the reaction S-formylglutathione + H2O = formate + glutathione + H(+). Functionally, serine hydrolase involved in the detoxification of formaldehyde. Hydrolyzes S-formylglutathione to glutathione and formate. This chain is S-formylglutathione hydrolase FrmB (frmB), found in Escherichia coli O9:H4 (strain HS).